The sequence spans 243 residues: Outer membrane protein A (243 aa).

Beta stranded transmembrane passes span 1-8, 13-21, 48-57, 62-69, and 88-96; these read LAAKLSYP, LDIYTRLGG, PLAAVGVEYA, WATRLDYQ, and MLSLGVSYR. A run of 5 repeats spans residues 104-105, 106-107, 108-109, 110-111, and 112-113. Positions 104–113 are 5 X 2 AA tandem repeats of A-P; that stretch reads APAPAPAPAP. An OmpA-like domain is found at 115-243; it reads VETKLFTLKS…RRVEIEVKGI (129 aa). An intrachain disulfide couples Cys215 to Cys229.

It belongs to the outer membrane OOP (TC 1.B.6) superfamily. OmpA family. In terms of assembly, monomer and homodimer.

Its subcellular location is the cell outer membrane. With TolR probably plays a role in maintaining the position of the peptidoglycan cell wall in the periplasm. Acts as a porin with low permeability that allows slow penetration of small solutes; an internal gate slows down solute passage. The protein is Outer membrane protein A of Serratia odorifera.